Here is a 398-residue protein sequence, read N- to C-terminus: Digeranylgeranylglycerophospholipid reductase (398 aa).

Positions 15, 34, 45, 46, 48, 99, 123, 280, 292, and 293 each coordinate FAD. Residue Val-372 coordinates a 2,3-bis-O-(geranylgeranyl)-sn-glycerol 1-phospholipid.

It belongs to the geranylgeranyl reductase family. DGGGPL reductase subfamily. FAD is required as a cofactor.

It catalyses the reaction a 2,3-bis-O-phytanyl-sn-glycerol 1-phospholipid + 8 oxidized 2[4Fe-4S]-[ferredoxin] = a 2,3-bis-O-(geranylgeranyl)-sn-glycerol 1-phospholipid + 8 reduced 2[4Fe-4S]-[ferredoxin] + 16 H(+). The catalysed reaction is 2,3-bis-O-(phytanyl)-sn-glycerol 1-phosphate + 8 oxidized 2[4Fe-4S]-[ferredoxin] = 2,3-bis-O-(geranylgeranyl)-sn-glycerol 1-phosphate + 8 reduced 2[4Fe-4S]-[ferredoxin] + 16 H(+). It carries out the reaction a 2,3-bis-O-phytanyl-sn-glycerol 1-phospholipid + 8 A = a 2,3-bis-O-(geranylgeranyl)-sn-glycerol 1-phospholipid + 8 AH2. The enzyme catalyses CDP-2,3-bis-O-(geranylgeranyl)-sn-glycerol + 8 AH2 = CDP-2,3-bis-O-(phytanyl)-sn-glycerol + 8 A. It catalyses the reaction archaetidylserine + 8 AH2 = 2,3-bis-O-phytanyl-sn-glycero-3-phospho-L-serine + 8 A. Its pathway is membrane lipid metabolism; glycerophospholipid metabolism. Functionally, is involved in the reduction of 2,3-digeranylgeranylglycerophospholipids (unsaturated archaeols) into 2,3-diphytanylglycerophospholipids (saturated archaeols) in the biosynthesis of archaeal membrane lipids. Catalyzes the formation of archaetidic acid (2,3-di-O-phytanyl-sn-glyceryl phosphate) from 2,3-di-O-geranylgeranylglyceryl phosphate (DGGGP) via the hydrogenation of each double bond of the isoprenoid chains. Is also probably able to reduce double bonds of geranyl groups in CDP-2,3-bis-O-(geranylgeranyl)-sn-glycerol and archaetidylserine, thus acting at various stages in the biosynthesis of archaeal membrane lipids. In Methanoculleus marisnigri (strain ATCC 35101 / DSM 1498 / JR1), this protein is Digeranylgeranylglycerophospholipid reductase.